The primary structure comprises 431 residues: Na(+)-translocating NADH-quinone reductase subunit F (431 aa).

A helical transmembrane segment spans residues 10–30 (ISIASLVFCVIGLILSGVILI). A 2Fe-2S ferredoxin-type domain is found at 41–133 (CKLKINNDDS…DMNLEIEERY (93 aa)). Positions 76, 82, 85, and 117 each coordinate [2Fe-2S] cluster. The 151-residue stretch at 136 to 286 (ASSWEGTVVS…SGPYGESFMK (151 aa)) folds into the FAD-binding FR-type domain.

It belongs to the NqrF family. In terms of assembly, composed of six subunits; NqrA, NqrB, NqrC, NqrD, NqrE and NqrF. [2Fe-2S] cluster serves as cofactor. It depends on FAD as a cofactor.

Its subcellular location is the cell inner membrane. It catalyses the reaction a ubiquinone + n Na(+)(in) + NADH + H(+) = a ubiquinol + n Na(+)(out) + NAD(+). Its function is as follows. NQR complex catalyzes the reduction of ubiquinone-1 to ubiquinol by two successive reactions, coupled with the transport of Na(+) ions from the cytoplasm to the periplasm. The first step is catalyzed by NqrF, which accepts electrons from NADH and reduces ubiquinone-1 to ubisemiquinone by a one-electron transfer pathway. The polypeptide is Na(+)-translocating NADH-quinone reductase subunit F (Chlamydia felis (strain Fe/C-56) (Chlamydophila felis)).